The sequence spans 425 residues: Serine hydroxymethyltransferase 2 (425 aa).

(6S)-5,6,7,8-tetrahydrofolate is bound by residues leucine 121 and 125 to 127 (GHL). Lysine 230 carries the post-translational modification N6-(pyridoxal phosphate)lysine.

It belongs to the SHMT family. Homodimer. It depends on pyridoxal 5'-phosphate as a cofactor.

The protein resides in the cytoplasm. The catalysed reaction is (6R)-5,10-methylene-5,6,7,8-tetrahydrofolate + glycine + H2O = (6S)-5,6,7,8-tetrahydrofolate + L-serine. The protein operates within one-carbon metabolism; tetrahydrofolate interconversion. It participates in amino-acid biosynthesis; glycine biosynthesis; glycine from L-serine: step 1/1. Functionally, catalyzes the reversible interconversion of serine and glycine with tetrahydrofolate (THF) serving as the one-carbon carrier. This reaction serves as the major source of one-carbon groups required for the biosynthesis of purines, thymidylate, methionine, and other important biomolecules. Also exhibits THF-independent aldolase activity toward beta-hydroxyamino acids, producing glycine and aldehydes, via a retro-aldol mechanism. This is Serine hydroxymethyltransferase 2 from Mycobacterium bovis (strain ATCC BAA-935 / AF2122/97).